The primary structure comprises 378 residues: Probable endopolygalacturonase NFIA_008150 (378 aa).

A signal peptide spans 1-19 (MLKLIGSLVLLASAAEVIA). Residues 20 to 35 (SPLAESVAPSITLEKR) constitute a propeptide that is removed on maturation. Residues Cys38 and Cys56 are joined by a disulfide bond. 3 PbH1 repeats span residues 147-169 (TSSS…SING), 170-200 (CDGL…DIGS), and 201-222 (SSNI…AVNS). Asp215 (proton donor) is an active-site residue. A disulfide bridge links Cys217 with Cys233. His237 is a catalytic residue. PbH1 repeat units follow at residues 247–273 (RSDN…RIKA) and 281–303 (IKGI…LIEQ). Asn254 carries N-linked (GlcNAc...) asparagine glycosylation. N-linked (GlcNAc...) asparagine glycosylation occurs at Asn327. 2 disulfides stabilise this stretch: Cys345-Cys350 and Cys369-Cys378.

Belongs to the glycosyl hydrolase 28 family.

It is found in the secreted. It carries out the reaction (1,4-alpha-D-galacturonosyl)n+m + H2O = (1,4-alpha-D-galacturonosyl)n + (1,4-alpha-D-galacturonosyl)m.. Involved in maceration and soft-rotting of plant tissue. Hydrolyzes the 1,4-alpha glycosidic bonds of de-esterified pectate in the smooth region of the plant cell wall. The chain is Probable endopolygalacturonase NFIA_008150 from Neosartorya fischeri (strain ATCC 1020 / DSM 3700 / CBS 544.65 / FGSC A1164 / JCM 1740 / NRRL 181 / WB 181) (Aspergillus fischerianus).